A 240-amino-acid polypeptide reads, in one-letter code: Uridylate kinase (240 aa).

13–16 (KLSG) contacts ATP. An involved in allosteric activation by GTP region spans residues 21 to 26 (GEKGFG). A UMP-binding site is contributed by glycine 55. Glycine 56 and arginine 60 together coordinate ATP. UMP-binding positions include aspartate 75 and 136–143 (IGNPYFST). Positions 164, 170, and 173 each coordinate ATP.

Belongs to the UMP kinase family. In terms of assembly, homohexamer.

It is found in the cytoplasm. It catalyses the reaction UMP + ATP = UDP + ADP. It participates in pyrimidine metabolism; CTP biosynthesis via de novo pathway; UDP from UMP (UMPK route): step 1/1. Its activity is regulated as follows. Allosterically activated by GTP. Inhibited by UTP. In terms of biological role, catalyzes the reversible phosphorylation of UMP to UDP. This Staphylococcus aureus (strain Newman) protein is Uridylate kinase.